A 288-amino-acid chain; its full sequence is Coiled-coil domain-containing protein 190 (288 aa).

The stretch at 16-69 (LERKSARQAEARLSLRLQRLEIICLYHVKSLAREQRQLQKELQRLQQDIIKKRF) forms a coiled coil. The segment at 141-235 (GERTSCFKEG…SSVDYAGSFK (95 aa)) is disordered. Positions 177–188 (HDQELSTNKTED) are enriched in basic and acidic residues. Polar residues predominate over residues 203-213 (ANETRSENASQ).

This is Coiled-coil domain-containing protein 190 (Ccdc190) from Mus musculus (Mouse).